Here is a 477-residue protein sequence, read N- to C-terminus: Bifunctional protein HldE (477 aa).

The interval 1–321 is ribokinase; sequence MKILKSFTPR…EYEASLHKST (321 aa). Residue 198–201 participates in ATP binding; sequence NKKE. Asp-266 is a catalytic residue. The segment at 348-477 is cytidylyltransferase; that stretch reads FTNGCFDILH…IQKIKGDLHV (130 aa).

This sequence in the N-terminal section; belongs to the carbohydrate kinase PfkB family. In the C-terminal section; belongs to the cytidylyltransferase family. Homodimer.

The enzyme catalyses D-glycero-beta-D-manno-heptose 7-phosphate + ATP = D-glycero-beta-D-manno-heptose 1,7-bisphosphate + ADP + H(+). It catalyses the reaction D-glycero-beta-D-manno-heptose 1-phosphate + ATP + H(+) = ADP-D-glycero-beta-D-manno-heptose + diphosphate. The protein operates within nucleotide-sugar biosynthesis; ADP-L-glycero-beta-D-manno-heptose biosynthesis; ADP-L-glycero-beta-D-manno-heptose from D-glycero-beta-D-manno-heptose 7-phosphate: step 1/4. It participates in nucleotide-sugar biosynthesis; ADP-L-glycero-beta-D-manno-heptose biosynthesis; ADP-L-glycero-beta-D-manno-heptose from D-glycero-beta-D-manno-heptose 7-phosphate: step 3/4. Catalyzes the phosphorylation of D-glycero-D-manno-heptose 7-phosphate at the C-1 position to selectively form D-glycero-beta-D-manno-heptose-1,7-bisphosphate. In terms of biological role, catalyzes the ADP transfer from ATP to D-glycero-beta-D-manno-heptose 1-phosphate, yielding ADP-D-glycero-beta-D-manno-heptose. In Sulfurimonas denitrificans (strain ATCC 33889 / DSM 1251) (Thiomicrospira denitrificans (strain ATCC 33889 / DSM 1251)), this protein is Bifunctional protein HldE.